Here is an 85-residue protein sequence, read N- to C-terminus: Putative membrane protein insertion efficiency factor (85 aa).

It belongs to the UPF0161 family.

Its subcellular location is the cell inner membrane. In terms of biological role, could be involved in insertion of integral membrane proteins into the membrane. This Vibrio cholerae serotype O1 (strain ATCC 39315 / El Tor Inaba N16961) protein is Putative membrane protein insertion efficiency factor.